The primary structure comprises 145 residues: D-aminoacyl-tRNA deacylase (145 aa).

Residues 137 to 138 carry the Gly-cisPro motif, important for rejection of L-amino acids motif; the sequence is GP.

It belongs to the DTD family. As to quaternary structure, homodimer.

The protein localises to the cytoplasm. It catalyses the reaction glycyl-tRNA(Ala) + H2O = tRNA(Ala) + glycine + H(+). The enzyme catalyses a D-aminoacyl-tRNA + H2O = a tRNA + a D-alpha-amino acid + H(+). An aminoacyl-tRNA editing enzyme that deacylates mischarged D-aminoacyl-tRNAs. Also deacylates mischarged glycyl-tRNA(Ala), protecting cells against glycine mischarging by AlaRS. Acts via tRNA-based rather than protein-based catalysis; rejects L-amino acids rather than detecting D-amino acids in the active site. By recycling D-aminoacyl-tRNA to D-amino acids and free tRNA molecules, this enzyme counteracts the toxicity associated with the formation of D-aminoacyl-tRNA entities in vivo and helps enforce protein L-homochirality. The protein is D-aminoacyl-tRNA deacylase of Pseudomonas fluorescens (strain ATCC BAA-477 / NRRL B-23932 / Pf-5).